We begin with the raw amino-acid sequence, 443 residues long: UDP-N-acetylmuramate--L-alanine ligase (443 aa).

110–116 (GAHGKTS) is a binding site for ATP.

Belongs to the MurCDEF family.

It is found in the cytoplasm. The catalysed reaction is UDP-N-acetyl-alpha-D-muramate + L-alanine + ATP = UDP-N-acetyl-alpha-D-muramoyl-L-alanine + ADP + phosphate + H(+). The protein operates within cell wall biogenesis; peptidoglycan biosynthesis. Its function is as follows. Cell wall formation. The protein is UDP-N-acetylmuramate--L-alanine ligase of Streptococcus agalactiae serotype V (strain ATCC BAA-611 / 2603 V/R).